The following is a 938-amino-acid chain: AP-4 complex subunit epsilon (938 aa).

10 HEAT repeats span residues 118-153 (DLII…INEE), 154-190 (TIPA…KSPS), 192-227 (VSHL…EDVN), 234-272 (SSFV…IMAL), 321-358 (KLLE…ISPD), 359-395 (IAEQ…SSNV), 397-431 (VIVD…QFAP), 454-495 (KVAH…EPKL), 517-556 (YSAS…FEIA), and 562-601 (DVLP…RAVE). 4 disordered regions span residues 690–712 (EPSY…RESS), 725–867 (WGRP…VMGL), 880–912 (VDSL…KEAL), and 919–938 (RQMG…DLLG). A compositionally biased stretch (polar residues) spans 694 to 706 (YSESHQPISTSLV). A compositionally biased stretch (low complexity) spans 728 to 744 (PSYQSTTAASSTTPQAA). The segment covering 764-779 (SSYEPKKPEIDPEKQR) has biased composition (basic and acidic residues). Over residues 808 to 821 (ANKTATVPKENQTP) the composition is skewed to polar residues. Low complexity-rich tracts occupy residues 853–863 (DSSSQDGGSSD) and 880–891 (VDSLLSELSDSS). The HEAT 11 repeat unit spans residues 874–911 (VTTTTSVDSLLSELSDSSKGNSRTYQPQTSKGPNTKEA). Polar residues predominate over residues 892–906 (KGNSRTYQPQTSKGP).

It belongs to the adaptor complexes large subunit family. Adaptor protein complex 4 (AP-4) is a heterotetramer composed of two large adaptins (epsilon-type subunit and beta-type subunit), a medium adaptin (mu-type subunit) and a small adaptin (sigma-type subunit).

It localises to the golgi apparatus. The protein resides in the trans-Golgi network. Its subcellular location is the membrane. The protein localises to the coated pit. Its function is as follows. Subunit of novel type of clathrin- or non-clathrin-associated protein coat involved in targeting proteins from the trans-Golgi network (TGN) to the endosomal-lysosomal system. This is AP-4 complex subunit epsilon from Arabidopsis thaliana (Mouse-ear cress).